A 745-amino-acid polypeptide reads, in one-letter code: DEAD-box ATP-dependent RNA helicase 3A, chloroplastic (745 aa).

The transit peptide at 1-41 (MASLVTLPAIAFSNPATASGAVRLRAAAFRCWALRRRGWAV) directs the protein to the chloroplast. A Q motif motif is present at residues 88–116 (LAIARLGLPDELVATLEKRGITHLFPIQR). Residues 119–295 (LIPALGGRDL…RRYLNNPLTI (177 aa)) form the Helicase ATP-binding domain. 132–139 (AKTGTGKT) provides a ligand contact to ATP. Residues 243–246 (DEAD) carry the DEAD box motif. One can recognise a Helicase C-terminal domain in the interval 324 to 469 (ILSDLITVYA…ISPPSIEEVL (146 aa)). Residues 606 to 724 (LTKISKLPAL…SLGGRESSRS (119 aa)) form a disordered region. The span at 641 to 650 (GGGASRGRGG) shows a compositional bias: gly residues. The span at 656 to 670 (EDRYRRGGRSLRSDN) shows a compositional bias: basic and acidic residues. Positions 687–724 (RSSSSFGGRSSSYGSRGSPSPSFGVRSSSLGGRESSRS) are enriched in low complexity. The CCHC-type zinc-finger motif lies at 727 to 744 (GACFNCGESGHRASDCPN).

Belongs to the DEAD box helicase family. DDX21/DDX50 subfamily.

The protein localises to the plastid. It localises to the chloroplast. The catalysed reaction is ATP + H2O = ADP + phosphate + H(+). Functionally, nuclear genome-encoded factor involved in ribosome biogenesis in chloroplasts. Binds specific group II introns in chloroplasts and facilitates their splicing. Required for normal development of chloroplasts. The chain is DEAD-box ATP-dependent RNA helicase 3A, chloroplastic from Zea mays (Maize).